Here is a 183-residue protein sequence, read N- to C-terminus: Shikimate kinase (183 aa).

An ATP-binding site is contributed by 18–23; the sequence is GVGKTT. Thr-22 is a Mg(2+) binding site. 3 residues coordinate substrate: Asp-40, Arg-64, and Gly-86. Residue Arg-125 coordinates ATP. Arg-143 lines the substrate pocket.

This sequence belongs to the shikimate kinase family. In terms of assembly, monomer. It depends on Mg(2+) as a cofactor.

The protein resides in the cytoplasm. It carries out the reaction shikimate + ATP = 3-phosphoshikimate + ADP + H(+). The protein operates within metabolic intermediate biosynthesis; chorismate biosynthesis; chorismate from D-erythrose 4-phosphate and phosphoenolpyruvate: step 5/7. In terms of biological role, catalyzes the specific phosphorylation of the 3-hydroxyl group of shikimic acid using ATP as a cosubstrate. The polypeptide is Shikimate kinase (Oceanobacillus iheyensis (strain DSM 14371 / CIP 107618 / JCM 11309 / KCTC 3954 / HTE831)).